The chain runs to 260 residues: Small ribosomal subunit protein uS2 (260 aa).

The disordered stretch occupies residues 240–260 (VLKPKLPYQPNRRPYQETVKK).

This sequence belongs to the universal ribosomal protein uS2 family.

This chain is Small ribosomal subunit protein uS2, found in Phytoplasma australiense.